The sequence spans 228 residues: MLETTQALFHLGPLAVGTTVVTTWGIMVVLSLGAWLASRRLRLDPGPFQVALEGVVQTIRAAVEEVVPRRADTVFPFVATLWLFIGIANLSSLIPRVHSPTADLSATTALALLVFFSVHWFGIRIQGLRPYLRHYLSPSPFLLPFHVIGEITRTLALAVRLFGNMMSLETAALLVLLVAGLFAPIPLLMLHIVEALVQAYIFGMLTLVYIAGAIQSLEARRSPKEEET.

The next 6 helical transmembrane spans lie at V16–L36, V74–I94, D103–I123, S139–V159, L173–V193, and E194–I214.

This sequence belongs to the ATPase A chain family. F-type ATPases have 2 components, CF(1) - the catalytic core - and CF(0) - the membrane proton channel. CF(1) has five subunits: alpha(3), beta(3), gamma(1), delta(1), epsilon(1). CF(0) has three main subunits: a(1), b(2) and c(9-12). The alpha and beta chains form an alternating ring which encloses part of the gamma chain. CF(1) is attached to CF(0) by a central stalk formed by the gamma and epsilon chains, while a peripheral stalk is formed by the delta and b chains.

Its subcellular location is the cell inner membrane. Key component of the proton channel; it plays a direct role in the translocation of protons across the membrane. This is ATP synthase subunit a 2 from Pelobacter propionicus (strain DSM 2379 / NBRC 103807 / OttBd1).